The chain runs to 262 residues: Nurim (262 aa).

At 1–4 (MAPA) the chain is on the nuclear side. A helical transmembrane segment spans residues 5–28 (LLLVPAALASFILAFGTGVEFVRF). Topologically, residues 29–58 (TSLRPLLGGIPESGGPDARQGWLAALQDQS) are perinuclear space. Residues 59–80 (ILVPLAWDLGLLLLFVGQHSLM) form a helical membrane-spanning segment. Residues 81 to 97 (ATETVKAWMSRYFGVLQ) are Nuclear-facing. The helical transmembrane segment at 98–114 (RSLYVACTALALQLVMR) threads the bilayer. At 115 to 133 (YWEPVPRGPVLWEAQAEPW) the chain is on the perinuclear space side. Residues 134–164 (ATWVPLLCFVLHVISWLLIFSILLVFDYAEL) traverse the membrane as a helical segment. The Nuclear segment spans residues 165-191 (MGLKQVYYHVLGLGEPLALKSPRALRL). The chain crosses the membrane as a helical span at residues 192–210 (FSHLRHPVCVELLTVLWVV). Over 211–216 (PTLGTD) the chain is Perinuclear space. A helical transmembrane segment spans residues 217–234 (RLLLALLLTLYLGLAHGL). The Nuclear portion of the chain corresponds to 235-262 (DQQDLRYLRAQLQRKLHLLSRPQDGEAE).

The protein belongs to the nurim family.

The protein resides in the nucleus inner membrane. The protein is Nurim (NRM) of Sus scrofa (Pig).